A 352-amino-acid polypeptide reads, in one-letter code: Protein RecA (352 aa).

65-72 (GPESSGKT) contacts ATP.

Belongs to the RecA family.

The protein resides in the cytoplasm. Its function is as follows. Can catalyze the hydrolysis of ATP in the presence of single-stranded DNA, the ATP-dependent uptake of single-stranded DNA by duplex DNA, and the ATP-dependent hybridization of homologous single-stranded DNAs. It interacts with LexA causing its activation and leading to its autocatalytic cleavage. In Pseudomonas fluorescens (strain SBW25), this protein is Protein RecA.